Reading from the N-terminus, the 166-residue chain is ATP synthase subunit b 1 (166 aa).

Residues 7-29 (FWTALAFVLFFVIFGRKLWVAIT) traverse the membrane as a helical segment.

Belongs to the ATPase B chain family. In terms of assembly, F-type ATPases have 2 components, F(1) - the catalytic core - and F(0) - the membrane proton channel. F(1) has five subunits: alpha(3), beta(3), gamma(1), delta(1), epsilon(1). F(0) has three main subunits: a(1), b(2) and c(10-14). The alpha and beta chains form an alternating ring which encloses part of the gamma chain. F(1) is attached to F(0) by a central stalk formed by the gamma and epsilon chains, while a peripheral stalk is formed by the delta and b chains.

It is found in the cell inner membrane. F(1)F(0) ATP synthase produces ATP from ADP in the presence of a proton or sodium gradient. F-type ATPases consist of two structural domains, F(1) containing the extramembraneous catalytic core and F(0) containing the membrane proton channel, linked together by a central stalk and a peripheral stalk. During catalysis, ATP synthesis in the catalytic domain of F(1) is coupled via a rotary mechanism of the central stalk subunits to proton translocation. Functionally, component of the F(0) channel, it forms part of the peripheral stalk, linking F(1) to F(0). The sequence is that of ATP synthase subunit b 1 from Gluconobacter oxydans (strain 621H) (Gluconobacter suboxydans).